Reading from the N-terminus, the 175-residue chain is MSSAVGKRYARALFEVASERSKIDQVEADLGAIVEAVEGNEDLKKIMLHPHIAADAKATLADELFKSHVGEEAFNFLNVLIENGREVDLVDIYRSFVQLANEARGFADAIVTSAKPLSTEEQNELAEKFGQTLNKKLRMTAVVDPAILGGVIIKIGDRLYDGSLKTKLETFAQKA.

It belongs to the ATPase delta chain family. In terms of assembly, F-type ATPases have 2 components, F(1) - the catalytic core - and F(0) - the membrane proton channel. F(1) has five subunits: alpha(3), beta(3), gamma(1), delta(1), epsilon(1). F(0) has three main subunits: a(1), b(2) and c(10-14). The alpha and beta chains form an alternating ring which encloses part of the gamma chain. F(1) is attached to F(0) by a central stalk formed by the gamma and epsilon chains, while a peripheral stalk is formed by the delta and b chains.

The protein localises to the cell membrane. F(1)F(0) ATP synthase produces ATP from ADP in the presence of a proton or sodium gradient. F-type ATPases consist of two structural domains, F(1) containing the extramembraneous catalytic core and F(0) containing the membrane proton channel, linked together by a central stalk and a peripheral stalk. During catalysis, ATP synthesis in the catalytic domain of F(1) is coupled via a rotary mechanism of the central stalk subunits to proton translocation. In terms of biological role, this protein is part of the stalk that links CF(0) to CF(1). It either transmits conformational changes from CF(0) to CF(1) or is implicated in proton conduction. The sequence is that of ATP synthase subunit delta from Brevibacillus brevis (strain 47 / JCM 6285 / NBRC 100599).